Reading from the N-terminus, the 353-residue chain is Nicotinate-nucleotide--dimethylbenzimidazole phosphoribosyltransferase (353 aa).

The active-site Proton acceptor is the E318.

The protein belongs to the CobT family.

It carries out the reaction 5,6-dimethylbenzimidazole + nicotinate beta-D-ribonucleotide = alpha-ribazole 5'-phosphate + nicotinate + H(+). It participates in nucleoside biosynthesis; alpha-ribazole biosynthesis; alpha-ribazole from 5,6-dimethylbenzimidazole: step 1/2. Functionally, catalyzes the synthesis of alpha-ribazole-5'-phosphate from nicotinate mononucleotide (NAMN) and 5,6-dimethylbenzimidazole (DMB). In Roseiflexus sp. (strain RS-1), this protein is Nicotinate-nucleotide--dimethylbenzimidazole phosphoribosyltransferase.